The chain runs to 1286 residues: Autotransporter adhesin AIDA-I (1286 aa).

Positions Met-1–Ala-49 are cleaved as a signal peptide. Residues Ser-102, Ser-111, and Ser-116 are each glycosylated (O-alpha-linked (glycero-D-manno-heptose) serine). A glycan (O-alpha-linked (glycero-D-manno-heptose) threonine) is linked at Thr-154. O-alpha-linked (glycero-D-manno-heptose) serine glycans are attached at residues Ser-242, Ser-252, Ser-334, Ser-391, Ser-409, Ser-539, Ser-545, Ser-558, Ser-569, Ser-576, Ser-577, and Ser-582. The Autotransporter domain occupies Thr-998–Phe-1286. A beta stranded membrane pass occupies residues Trp-1006–Gly-1012. The Extracellular portion of the chain corresponds to Ile-1013–Gln-1029. The beta stranded transmembrane segment at Phe-1030–Lys-1040 threads the bilayer. The Periplasmic portion of the chain corresponds to Phe-1041 to Gly-1047. Residues Asp-1048–Ala-1058 traverse the membrane as a beta stranded segment. Residues Asn-1059–Gly-1079 lie on the Extracellular side of the membrane. Residues Tyr-1080 to Thr-1087 traverse the membrane as a beta stranded segment. The Periplasmic segment spans residues Trp-1088–Gly-1097. A beta stranded transmembrane segment spans residues Leu-1098–Trp-1108. Residues Phe-1109–Asn-1126 are Extracellular-facing. The chain crosses the membrane as a beta stranded span at residues Gly-1127–Leu-1138. Residues Asn-1139–Glu-1152 lie on the Periplasmic side of the membrane. Residues Phe-1153–Met-1164 traverse the membrane as a beta stranded segment. Residues Gly-1165–Asn-1186 are Extracellular-facing. The chain crosses the membrane as a beta stranded span at residues Ile-1187–Lys-1198. The Periplasmic portion of the chain corresponds to Val-1199–Arg-1210. A beta stranded transmembrane segment spans residues Phe-1211–His-1221. Residues Asn-1222–Asn-1242 are Extracellular-facing. Residues Gln-1243–Val-1253 form a beta stranded membrane-spanning segment. Residues Ile-1254–Ser-1259 are Periplasmic-facing. A beta stranded membrane pass occupies residues Val-1260–Gln-1267. Residues Ala-1268–Ala-1275 are Extracellular-facing. A beta stranded transmembrane segment spans residues Ile-1276–Tyr-1284. Topologically, residues Ser-1285–Phe-1286 are periplasmic.

In terms of assembly, intercellular AIDA-AIDA interaction is responsible for bacterial autoaggregation. AIDA can also interact with antigen 43 (Ag43), and the resultant intercellular AIDA-Ag43 interaction causes cell aggregation. Post-translationally, glycosylated on serine residues by AHH and AAH2 in the cytoplasm. Glycosylated with an average of 19 heptose residues. Glycosylated with either ADP-L, D-heptose or ADP-D, D-heptose. Glycosylation is required for protein folding/stabilization and resistance to protease-mediated degradation. Glycosylation is required for bacteria adhesion to mammalian cells. Glycosylation is dispensable for cell outer membrane localization. Glycosylation is dispensable for AIDA-mediated cell-cell aggregation and induction of biofilm formation. Glycosylation is dispensable for interaction with Ag43.

The protein localises to the periplasm. Its subcellular location is the secreted. It localises to the cell surface. It is found in the cell outer membrane. In terms of biological role, potent bacterial adhesin that mediates bacterial attachment to a broad variety of human and other mammalian cells. Has additional virulence properties, as it is capable of mediating bacterial autoaggregation via intercellular self-recognition and it is a highly efficient initiator of biofilm formation. This Escherichia coli protein is Autotransporter adhesin AIDA-I (aidA).